Here is a 378-residue protein sequence, read N- to C-terminus: Erythronate-4-phosphate dehydrogenase (378 aa).

Positions 45 and 67 each coordinate substrate. Residue Asp-147 participates in NAD(+) binding. Arg-209 is an active-site residue. Asp-233 provides a ligand contact to NAD(+). The active site involves Glu-238. His-255 serves as the catalytic Proton donor. Residue Gly-258 participates in NAD(+) binding. Tyr-259 provides a ligand contact to substrate.

Belongs to the D-isomer specific 2-hydroxyacid dehydrogenase family. PdxB subfamily. In terms of assembly, homodimer.

It is found in the cytoplasm. The enzyme catalyses 4-phospho-D-erythronate + NAD(+) = (R)-3-hydroxy-2-oxo-4-phosphooxybutanoate + NADH + H(+). The protein operates within cofactor biosynthesis; pyridoxine 5'-phosphate biosynthesis; pyridoxine 5'-phosphate from D-erythrose 4-phosphate: step 2/5. In terms of biological role, catalyzes the oxidation of erythronate-4-phosphate to 3-hydroxy-2-oxo-4-phosphonooxybutanoate. The sequence is that of Erythronate-4-phosphate dehydrogenase from Shewanella denitrificans (strain OS217 / ATCC BAA-1090 / DSM 15013).